The sequence spans 327 residues: Probable cell division protein WhiA (327 aa).

Residues serine 275–lysine 308 constitute a DNA-binding region (H-T-H motif).

The protein belongs to the WhiA family.

In terms of biological role, involved in cell division and chromosome segregation. The protein is Probable cell division protein WhiA of Mycobacterium leprae (strain Br4923).